The chain runs to 911 residues: Protein dead ringer (911 aa).

Disordered stretches follow at residues 1–44 (MQLR…DCDS), 67–87 (SGGGGSFASPEPQTELPLSHH), and 172–274 (HVTS…QNNG). The span at 19 to 34 (IERDSDLGDDLSHGDR) shows a compositional bias: basic and acidic residues. Phosphoserine is present on Ser-30. Thr-35 is subject to Phosphothreonine. Ser-44 bears the Phosphoserine mark. Residues 174–201 (TSSPSGGNGSSYNGGTTPTNSSNSNATT) are compositionally biased toward low complexity. Residues 202 to 231 (NGGGTAGPGGTGGSGGGGGGGGGGGGGVGG) are compositionally biased toward gly residues. Over residues 252–273 (AANSASNSSTSSEASNSSQQNN) the composition is skewed to low complexity. In terms of domain architecture, ARID spans 293–385 (DPKRKEFLDD…YLYPYECEKK (93 aa)). Disordered stretches follow at residues 501–633 (GMPP…VGSG), 662–775 (PSMG…GKLN), and 826–877 (QSET…DQDM). Low complexity predominate over residues 512–550 (HQQQHSQQQQQQQHHHQQQQQQQSQQQHHLQQQRQRSQS). Residues 570–600 (HNNNSPPGSAHTSPQQREALNLSDSPPNLTN) show a composition bias toward polar residues. A phosphoserine mark is found at Ser-592 and Ser-594. Over residues 601-621 (IKREREREPTPEPVDQDDKFV) the composition is skewed to basic and acidic residues. Ser-720 is subject to Phosphoserine. Residues 731–825 (TTGGSVGHRH…GVLVANVPLS (95 aa)) enclose the REKLES domain. Basic residues predominate over residues 737-751 (GHRHSSPVSTKKKGG). Residues 841 to 853 (TVEEEKDEEEEEE) show a composition bias toward acidic residues. Residues 854 to 870 (PKAAEEESHRSPVKQEN) are compositionally biased toward basic and acidic residues.

As to expression, present in the pharyngeal muscles, hindgut epithelium, amnioserosa, ring gland, midgut-hindgut junction, posterior region of each brain lobe, longitudinal glial cells of the CNS and the salivary gland duct of germ-band retracted embryos.

The protein resides in the nucleus. Its function is as follows. Transcription factor which is a downstream target of gcm and repo. Directly or indirectly activates the transcription of locos and pros, which are essential for the development of some glial cells. Plays an essential role in defining the cell shape and migration characteristics of longitudinal glia that enable them to establish a normal axon scaffold. The sequence is that of Protein dead ringer (retn) from Drosophila melanogaster (Fruit fly).